The sequence spans 405 residues: Fragilysin (405 aa).

The signal sequence occupies residues 1-25 (MFILNFNKMKNVKLLLMLGTAALLA). Zn(2+) is bound at residue H356. Residue E357 is part of the active site. 2 residues coordinate Zn(2+): H360 and H366.

This sequence belongs to the peptidase M10C family. It depends on Zn(2+) as a cofactor.

The protein resides in the secreted. It catalyses the reaction Broad proteolytic specificity, bonds hydrolyzed includes -Gly-|-Leu-, -Met-|-Leu-, -Phe-|-Leu-, -Cys-|-Leu-, -Leu-|-Gly-.. Functionally, diarrheal toxin that hydrolyzes gelatin, azocoll, actin, tropomyosin, and fibrinogen. This is Fragilysin (btfP) from Bacteroides fragilis.